We begin with the raw amino-acid sequence, 528 residues long: Glycerol kinase 5 (528 aa).

Residues serine 28 and serine 29 each contribute to the ATP site. Glycerol contacts are provided by arginine 98, aspartate 275, and glutamine 276. ATP-binding residues include threonine 297, glycine 340, and glycine 440.

It belongs to the FGGY kinase family.

Its subcellular location is the cytoplasm. It catalyses the reaction glycerol + ATP = sn-glycerol 3-phosphate + ADP + H(+). The protein operates within polyol metabolism; glycerol degradation via glycerol kinase pathway; sn-glycerol 3-phosphate from glycerol: step 1/1. Skin-specific kinase that plays a key role in glycerol metabolism, catalyzing its phosphorylation to produce sn-glycerol 3-phosphate. Involved in skin-specific regulation of sterol regulatory element-binding protein (SREBP) processing and lipid biosynthesis. The sequence is that of Glycerol kinase 5 (GK5) from Bos taurus (Bovine).